Reading from the N-terminus, the 228-residue chain is Ankyrin repeat domain-containing protein 46 (228 aa).

ANK repeat units follow at residues 11-40 (QTNV…DPNI), 44-73 (RGRT…DLLA), 77-103 (QGNT…KIDI), and 107-138 (QGAT…EVKG). A helical membrane pass occupies residues 195–215 (VLLLIFVIALLSLGIAYYVSG).

It localises to the membrane. The sequence is that of Ankyrin repeat domain-containing protein 46 (ANKRD46) from Bos taurus (Bovine).